The primary structure comprises 387 residues: ATP phosphoribosyltransferase regulatory subunit (387 aa).

This sequence belongs to the class-II aminoacyl-tRNA synthetase family. HisZ subfamily. As to quaternary structure, heteromultimer composed of HisG and HisZ subunits.

The protein localises to the cytoplasm. It functions in the pathway amino-acid biosynthesis; L-histidine biosynthesis; L-histidine from 5-phospho-alpha-D-ribose 1-diphosphate: step 1/9. Functionally, required for the first step of histidine biosynthesis. May allow the feedback regulation of ATP phosphoribosyltransferase activity by histidine. The polypeptide is ATP phosphoribosyltransferase regulatory subunit (Ralstonia pickettii (strain 12J)).